A 349-amino-acid polypeptide reads, in one-letter code: Cyclic amide hydrolase (349 aa).

Positions Met-1–Ser-90 are RU A. Residue Arg-38 participates in substrate binding. The tract at residues Gly-99 to Pro-231 is RU B. Residue Lys-149 is part of the active site. Residues Arg-176, Ser-214 to Ala-215, Lys-311, and Ser-330 to Gly-331 each bind substrate. Ser-214 serves as the catalytic Nucleophile. An RU C region spans residues Tyr-237–Arg-349.

Belongs to the cyclic amide hydrolase (CyAH) family. As to quaternary structure, homotetramer.

Its function is as follows. Cyclic amide hydrolase of unknown substrate specificity. Catalyzes the hydrolytic ring-opening of a cyclic amide. Does not act on cyanuric acid nor barbituric acid. The protein is Cyclic amide hydrolase of Rhodococcus sp.